We begin with the raw amino-acid sequence, 211 residues long: RNA chaperone ProQ (211 aa).

Residues 113–147 (RRAVEKANNPKANKKRSVYHSGNKSENKKSAGKKF) form a disordered region.

The protein belongs to the ProQ family.

It is found in the cytoplasm. Its function is as follows. RNA chaperone with significant RNA binding, RNA strand exchange and RNA duplexing activities. The sequence is that of RNA chaperone ProQ from Histophilus somni (strain 129Pt) (Haemophilus somnus).